The primary structure comprises 197 residues: Segregation and condensation protein B (197 aa).

It belongs to the ScpB family. Homodimer. Homodimerization may be required to stabilize the binding of ScpA to the Smc head domains. Component of a cohesin-like complex composed of ScpA, ScpB and the Smc homodimer, in which ScpA and ScpB bind to the head domain of Smc. The presence of the three proteins is required for the association of the complex with DNA.

Its subcellular location is the cytoplasm. Functionally, participates in chromosomal partition during cell division. May act via the formation of a condensin-like complex containing Smc and ScpA that pull DNA away from mid-cell into both cell halves. In Bacillus licheniformis (strain ATCC 14580 / DSM 13 / JCM 2505 / CCUG 7422 / NBRC 12200 / NCIMB 9375 / NCTC 10341 / NRRL NRS-1264 / Gibson 46), this protein is Segregation and condensation protein B.